Consider the following 86-residue polypeptide: Large ribosomal subunit protein bL27 (86 aa).

This sequence belongs to the bacterial ribosomal protein bL27 family.

The sequence is that of Large ribosomal subunit protein bL27 from Flavobacterium psychrophilum (strain ATCC 49511 / DSM 21280 / CIP 103535 / JIP02/86).